The following is a 2470-amino-acid chain: Serine/threonine-protein kinase mTor (2470 aa).

8 HEAT repeats span residues 172 to 209 (QHIL…VTAQ), 746 to 785 (SYMN…VNGG), 791 to 829 (LWAD…ATGR), 835 to 873 (HKYP…MDPY), 962 to 999 (PYLA…FVKL), 1043 to 1080 (DYLA…FGST), 1083 to 1122 (YYLP…QLDF), and 1124 to 1160 (DFSS…QLGK). Positions 1349–1903 (LLGTRAMACR…VYPLTVASKS (555 aa)) constitute an FAT domain. TPR repeat units follow at residues 1407-1440 (ANEL…DSSD) and 1718-1751 (MATW…DPNW). An HEAT 9 repeat occupies 1854–1891 (NTWLQVIPQLIARIDTHRQLVGQLIHQLLMDIGKNHPQ). The 313-residue stretch at 2077–2389 (IKTNLQVITS…SLSNSVEDSL (313 aa)) folds into the PI3K/PI4K catalytic domain. A G-loop region spans residues 2083 to 2089 (VITSKQR). Positions 2256 to 2264 (GLGDRHPSN) are catalytic loop. The tract at residues 2276 to 2301 (HIDFGDCFEVAMTREKFPEKIPFRLT) is activation loop. The tract at residues 2364 to 2389 (AGAGAPGGRGGSGMQDSLSNSVEDSL) is disordered. Gly residues predominate over residues 2367-2376 (GAPGGRGGSG). Residues 2377-2386 (MQDSLSNSVE) show a composition bias toward polar residues. The 33-residue stretch at 2438 to 2470 (KSVNEQSQVELLIQQATNNENLCQCYIGWCPFW) folds into the FATC domain.

This sequence belongs to the PI3/PI4-kinase family. May be part of a minimal complex, TORC1, consisting of mTor, raptor and lst8. May be part of a minimal complex, TORC2, consisting of mTor, rictor and lst8. Self-associates; assembles into homomultimeric complexes. Component of a multiprotein complex.

The enzyme catalyses L-seryl-[protein] + ATP = O-phospho-L-seryl-[protein] + ADP + H(+). It carries out the reaction L-threonyl-[protein] + ATP = O-phospho-L-threonyl-[protein] + ADP + H(+). Functionally, promotes cell and tissue growth, maintains tissue homeostatis and controls responses to environmental stress and aging. Regulates growth during animal development by coupling growth factor signaling to nutrient availability. Central regulators of autophagy. May be involved in atg1 phosphorylation. May also be involved, directly or indirectly, in the control of neuronal function. Phosphorylates S6K/p70S6K, in vitro. May regulate the activity of S6K. Overexpression inhibits growth and reduces cell size. Affects the timing of neuronal cell differentiation. Hyperactivation of the signaling leads to accelerated differentiation, whereas inhibition of the signaling retards differentiation. Thus, in addition to controlling growth of the cell in which it resides, it can also influence growth of distant cells and organs during development via a humoral mechanism. As part of the TORC1 complex regulates energy homeostasis and promotes certain aspects of larval growth by negatively regulating REPTOR. REPTOR functions downstream of TORC1 to regulate the expression of stress response genes in response to TORC1 inhibition resulting from nutrient deprivation. When TORC1 activity is high it phosphorylates REPTOR which inhibits its recruitment into the nucleus and antagonizes their function. This function is essential under normal feeding conditions to promote TORC1-dependent growth during larval development and, in adults and larvae to prevent the REPTOR-dependent expression of nutrient stress response genes. In short, during development, it primarily controls growth, whereas in the adult, where there is relatively little growth, it controls aging and other aspects of nutrient-related physiology. Rag GTPases act as activators of TORC1 in response to amino acid signals. This chain is Serine/threonine-protein kinase mTor, found in Drosophila melanogaster (Fruit fly).